Here is a 1101-residue protein sequence, read N- to C-terminus: Leucine-rich repeat receptor-like serine/threonine-protein kinase At1g17230 (1101 aa).

The first 23 residues, 1–23 (MRGRICFLAIVILCSFSFILVRS), serve as a signal peptide directing secretion. The Extracellular portion of the chain corresponds to 24–734 (LNEEGRVLLE…WLINGSQRQK (711 aa)). 4 N-linked (GlcNAc...) asparagine glycosylation sites follow: Asn-39, Asn-57, Asn-78, and Asn-97. 26 LRR repeats span residues 66–90 (LRTV…ICKL), 91–115 (HGLR…SLCR), 117–137 (LEVL…QLTM), 138–162 (IITL…IGNL), 163–186 (SSLQ…MAKL), 188–210 (QLRI…ISGC), 211–234 (ESLK…LEKL), 235–258 (QNLT…VGNI), 260–282 (RLEV…IGKL), 283–306 (TKMK…IGNL), 308–329 (DAAE…EFGH), 330–354 (ILNL…LGEL), 355–379 (TLLE…QFLP), 381–402 (LVDL…IGFY), 403–426 (SNFS…FCRF), 427–450 (QTLI…LKTC), 451–474 (KSLT…LFNL), 476–498 (NLTA…LGKL), 499–522 (KNLE…IGNL), 524–546 (KIVG…LGSC), 548–569 (TIQR…ELGQ), 570–593 (LVYL…SFGD), 595–618 (TRLM…LGKL), 619–643 (TSLQ…LGNL), 644–667 (QMLE…IGNL), and 669–692 (SLLI…VFQR). 2 N-linked (GlcNAc...) asparagine glycosylation sites follow: Asn-161 and Asn-174. Residues Asn-236 and Asn-257 are each glycosylated (N-linked (GlcNAc...) asparagine). N-linked (GlcNAc...) asparagine glycosylation occurs at Asn-368. N-linked (GlcNAc...) asparagine glycosylation occurs at Asn-404. Residues Asn-476, Asn-490, Asn-510, Asn-521, and Asn-529 are each glycosylated (N-linked (GlcNAc...) asparagine). Asn-626 and Asn-631 each carry an N-linked (GlcNAc...) asparagine glycan. N-linked (GlcNAc...) asparagine glycans are attached at residues Asn-674 and Asn-728. A helical transmembrane segment spans residues 735–755 (ILTITCIVIGSVFLITFLGLC). Topologically, residues 756 to 1101 (WTIKRREPAF…LEEANSSKEI (346 aa)) are cytoplasmic. Residues Thr-788 and Thr-796 each carry the phosphothreonine modification. In terms of domain architecture, Protein kinase spans 799-1081 (FSEDVVLGRG…ITEARGSSSL (283 aa)). ATP-binding positions include 805-813 (LGRGACGTV) and Lys-827. Phosphotyrosine occurs at positions 874 and 913. Asp-926 functions as the Proton acceptor in the catalytic mechanism. Position 960 is a phosphoserine (Ser-960). 2 positions are modified to phosphotyrosine: Tyr-968 and Tyr-975. Phosphothreonine is present on Thr-976. A disordered region spans residues 1076 to 1101 (RGSSSLSSSSITSETPLEEANSSKEI). The span at 1078–1088 (SSSLSSSSITS) shows a compositional bias: low complexity.

It belongs to the protein kinase superfamily. Ser/Thr protein kinase family.

The protein localises to the cell membrane. The enzyme catalyses L-seryl-[protein] + ATP = O-phospho-L-seryl-[protein] + ADP + H(+). It carries out the reaction L-threonyl-[protein] + ATP = O-phospho-L-threonyl-[protein] + ADP + H(+). This chain is Leucine-rich repeat receptor-like serine/threonine-protein kinase At1g17230, found in Arabidopsis thaliana (Mouse-ear cress).